The following is a 101-amino-acid chain: Small ribosomal subunit protein uS14 (101 aa).

The segment at 1–21 (MAKTSAVEKNKRRRKSVAQQA) is disordered.

The protein belongs to the universal ribosomal protein uS14 family. In terms of assembly, part of the 30S ribosomal subunit. Contacts proteins S3 and S10.

Its function is as follows. Binds 16S rRNA, required for the assembly of 30S particles and may also be responsible for determining the conformation of the 16S rRNA at the A site. The protein is Small ribosomal subunit protein uS14 of Agrobacterium fabrum (strain C58 / ATCC 33970) (Agrobacterium tumefaciens (strain C58)).